Reading from the N-terminus, the 330-residue chain is Putative protein N-methyltransferase FAM86B2 (330 aa).

The residue at position 1 (Met-1) is an N-acetylmethionine. S-adenosyl-L-methionine-binding positions include Trp-139, 165-167, Trp-228, and Ala-247; that span reads GSG.

Belongs to the class I-like SAM-binding methyltransferase superfamily. EEF2KMT family. Interacts with EEF2KMT.

The protein is Putative protein N-methyltransferase FAM86B2 (FAM86B2) of Homo sapiens (Human).